Here is a 273-residue protein sequence, read N- to C-terminus: 3-methyl-2-oxobutanoate hydroxymethyltransferase (273 aa).

Residues Asp-49 and Asp-88 each contribute to the Mg(2+) site. Residues 49–50 (DS), Asp-88, and Lys-118 each bind 3-methyl-2-oxobutanoate. Position 120 (Glu-120) interacts with Mg(2+). The Proton acceptor role is filled by Glu-187.

The protein belongs to the PanB family. In terms of assembly, homodecamer; pentamer of dimers. Mg(2+) serves as cofactor.

The protein localises to the cytoplasm. The enzyme catalyses 3-methyl-2-oxobutanoate + (6R)-5,10-methylene-5,6,7,8-tetrahydrofolate + H2O = 2-dehydropantoate + (6S)-5,6,7,8-tetrahydrofolate. It participates in cofactor biosynthesis; (R)-pantothenate biosynthesis; (R)-pantoate from 3-methyl-2-oxobutanoate: step 1/2. Functionally, catalyzes the reversible reaction in which hydroxymethyl group from 5,10-methylenetetrahydrofolate is transferred onto alpha-ketoisovalerate to form ketopantoate. This chain is 3-methyl-2-oxobutanoate hydroxymethyltransferase, found in Sinorhizobium fredii (strain NBRC 101917 / NGR234).